Here is a 238-residue protein sequence, read N- to C-terminus: Protein TIFY 3A (238 aa).

One can recognise a Tify 1 domain in the interval 39-74 (EPDASTQLTIIFGGSCRVFNGVPAQKVQEIIRIAFA). Positions 101–120 (PIARRRSLQRFLEKRRDRST) match the Jas 1 motif. Residues 103–110 (ARRRSLQR) carry the Nuclear localization signal 1 motif. The region spanning 125–160 (SMILPSQLTIIFGGSFSVFDGIPAEKVQEILHIAAA) is the Tify 2 domain. A Jas 2 motif is present at residues 197–222 (PIARRRSLQRFFEKRRHRFVHTKPYS). The Nuclear localization signal 2 motif lies at 199–206 (ARRRSLQR). The tract at residues 219–238 (KPYSATTSEADKNETSPIVT) is disordered.

It belongs to the TIFY/JAZ family. In terms of assembly, interacts with MYC2, MYB21, MYB24, AFPH2/NINJA, TIFY10A/JAZ1, TIFY10B/JAZ2, TIFY6B/JAZ3, TIFY6A/JAZ4, TIFY7/JAZ9 and TIFY9/JAZ10. Ubiquitinated. Targeted for degradation by the SCF(COI1) E3 ubiquitin ligase-proteasome pathway during jasmonate signaling.

The protein resides in the nucleus. Its function is as follows. Repressor of jasmonate (JA) responses. Targets MYC2, MYC3 and MYC4 that are JA-dependent transcription activators. This is Protein TIFY 3A (TIFY3A) from Arabidopsis thaliana (Mouse-ear cress).